The chain runs to 102 residues: MQKARIKLASTNVRSLEEVANQIRQIAERTGVRMSGPIPLPTKRIRIVTRKSPDGEGSATFDRWELRIHKRLIDIEADERAMRQIMRIRVPEDVTIEIELIS.

It belongs to the universal ribosomal protein uS10 family. As to quaternary structure, part of the 30S ribosomal subunit.

Functionally, involved in the binding of tRNA to the ribosomes. This is Small ribosomal subunit protein uS10 from Pyrococcus horikoshii (strain ATCC 700860 / DSM 12428 / JCM 9974 / NBRC 100139 / OT-3).